The sequence spans 367 residues: Anhydro-N-acetylmuramic acid kinase (367 aa).

Position 13 to 20 (13 to 20 (GTSMDGAD)) interacts with ATP.

It belongs to the anhydro-N-acetylmuramic acid kinase family.

The enzyme catalyses 1,6-anhydro-N-acetyl-beta-muramate + ATP + H2O = N-acetyl-D-muramate 6-phosphate + ADP + H(+). It functions in the pathway amino-sugar metabolism; 1,6-anhydro-N-acetylmuramate degradation. Its pathway is cell wall biogenesis; peptidoglycan recycling. Functionally, catalyzes the specific phosphorylation of 1,6-anhydro-N-acetylmuramic acid (anhMurNAc) with the simultaneous cleavage of the 1,6-anhydro ring, generating MurNAc-6-P. Is required for the utilization of anhMurNAc either imported from the medium or derived from its own cell wall murein, and thus plays a role in cell wall recycling. The protein is Anhydro-N-acetylmuramic acid kinase of Neisseria meningitidis serogroup A / serotype 4A (strain DSM 15465 / Z2491).